The following is a 356-amino-acid chain: Dual-specificity RNA methyltransferase RlmN (356 aa).

The active-site Proton acceptor is the E89. Residues 108-341 (SHARYTICVS…CTIRESKGLD (234 aa)) enclose the Radical SAM core domain. C115 and C346 are joined by a disulfide. The [4Fe-4S] cluster site is built by C122, C126, and C129. Residues 172–173 (GE), S204, 227–229 (SLH), and N303 contribute to the S-adenosyl-L-methionine site. Catalysis depends on C346, which acts as the S-methylcysteine intermediate.

This sequence belongs to the radical SAM superfamily. RlmN family. [4Fe-4S] cluster serves as cofactor.

It is found in the cytoplasm. It catalyses the reaction adenosine(2503) in 23S rRNA + 2 reduced [2Fe-2S]-[ferredoxin] + 2 S-adenosyl-L-methionine = 2-methyladenosine(2503) in 23S rRNA + 5'-deoxyadenosine + L-methionine + 2 oxidized [2Fe-2S]-[ferredoxin] + S-adenosyl-L-homocysteine. It carries out the reaction adenosine(37) in tRNA + 2 reduced [2Fe-2S]-[ferredoxin] + 2 S-adenosyl-L-methionine = 2-methyladenosine(37) in tRNA + 5'-deoxyadenosine + L-methionine + 2 oxidized [2Fe-2S]-[ferredoxin] + S-adenosyl-L-homocysteine. Specifically methylates position 2 of adenine 2503 in 23S rRNA and position 2 of adenine 37 in tRNAs. m2A2503 modification seems to play a crucial role in the proofreading step occurring at the peptidyl transferase center and thus would serve to optimize ribosomal fidelity. The sequence is that of Dual-specificity RNA methyltransferase RlmN from Campylobacter jejuni subsp. jejuni serotype O:2 (strain ATCC 700819 / NCTC 11168).